The sequence spans 905 residues: MDDVERIQSENENLRKIRNRLMQWESKTDPLAALSIQQEEHLDVLTNLWRDSGPSAPAPTTPTQVGPTDSSAAATSQSGDDIRLPAEGLQNTNEFLLWFADVSAEIEQRGDADYHKYLQQLEQRKAECSHMLDQIAGAMERLGALCDEYDFVSQKTSALNTASEQLIEEQERLQELSHEIQRRLHYFSQVELLNQRLQSPTLSVASEAFRECLNKIDECLNYIEENPKFKDAAAYNVKYRQCLAKASGLVRNYVTSVINQATEATLHPKNNMPDASAALKAPDAAFALYYGKYQTAAAKVKRVAQLIESRSEHSLDYAQLMADLQQHYLAQRASVMSPAVNLSIQNVKVAHKGDHCSLTRSACAFLVHVCQDEQRLFYQFFSTGAPHLTVYLEGLCTILYDTMRPFIIHINHLETLAEICSILRIEMLEEHVQQNPVALEAFATIAHQLLQDVQERLVFRAHLYLQSDIQNFNPSSGDLAYPEKLEMMESIALSLQEPAPLRRSDSRNSMVSSVSSAVETESVATAYTVKQMNSPADLHGMWYPTVRRTLVCLSRLYRCVDRPIFQGLSQEALKLCIQSVSHAAGKISANKTPIDGELFEIKHLLILREQIAPFRVDFTVKETSLDFSKVKTAAFGLLQKRKQLFSMGSNNALLEFLLEGTPQIKEHLLDSRKEVDRQLKSVCEKYIKDAVQMLVGPLITFLEKAQSLLAQSTPATPQSPESTKASYVLRQSPWASPQQISSIIQETQRLIKAKLAVLQRSMQLYLSNRDTEFIIFRPIRNNIIQSFVKLEQLLTTNGYSTDDMIITSCPSAEQVSILLSSASILAAEGVASFAAAARKISTSSSVEGSTVGRKLSAMSNKSELVEEPKVEEVAGQIEVVPAEVQPPAKIEEEEVTETQTQANSE.

The tract at residues 49–78 (WRDSGPSAPAPTTPTQVGPTDSSAAATSQS) is disordered. Residues 64 to 78 (QVGPTDSSAAATSQS) are compositionally biased toward polar residues. 5 positions are modified to phosphoserine: serine 841, serine 845, serine 856, serine 859, and serine 862. Positions 884–905 (VQPPAKIEEEEVTETQTQANSE) are disordered.

It belongs to the COG3 family. Component of the conserved oligomeric Golgi complex which is composed of eight different subunits and is required for normal Golgi morphology and localization.

It is found in the golgi apparatus membrane. In terms of biological role, involved in ER-Golgi transport. The sequence is that of Conserved oligomeric Golgi complex subunit 3 (Cog3) from Drosophila melanogaster (Fruit fly).